The primary structure comprises 658 residues: DNA ligase (658 aa).

NAD(+) is bound by residues 31–35 (DFEYD), 80–81 (SL), and glutamate 110. Lysine 112 (N6-AMP-lysine intermediate) is an active-site residue. Residues arginine 133, glutamate 167, lysine 279, and lysine 303 each coordinate NAD(+). Zn(2+) is bound by residues cysteine 397, cysteine 400, cysteine 415, and cysteine 420. One can recognise a BRCT domain in the interval 584–654 (DTASIYFQKS…KALNIPIINE (71 aa)).

This sequence belongs to the NAD-dependent DNA ligase family. LigA subfamily. It depends on Mg(2+) as a cofactor. The cofactor is Mn(2+).

The enzyme catalyses NAD(+) + (deoxyribonucleotide)n-3'-hydroxyl + 5'-phospho-(deoxyribonucleotide)m = (deoxyribonucleotide)n+m + AMP + beta-nicotinamide D-nucleotide.. DNA ligase that catalyzes the formation of phosphodiester linkages between 5'-phosphoryl and 3'-hydroxyl groups in double-stranded DNA using NAD as a coenzyme and as the energy source for the reaction. It is essential for DNA replication and repair of damaged DNA. The chain is DNA ligase from Mycoplasma pneumoniae (strain ATCC 29342 / M129 / Subtype 1) (Mycoplasmoides pneumoniae).